Reading from the N-terminus, the 180-residue chain is Ribosome rescue factor SmrB (180 aa).

The Smr domain occupies 98–173 (LDLHGLTQLI…GDAALLLLVE (76 aa)).

It belongs to the SmrB family. As to quaternary structure, associates with collided ribosomes, but not with correctly translating polysomes.

Functionally, acts as a ribosome collision sensor. Detects stalled/collided disomes (pairs of ribosomes where the leading ribosome is stalled and a second ribosome has collided with it) and endonucleolytically cleaves mRNA at the 5' boundary of the stalled ribosome. Stalled/collided disomes form a new interface (primarily via the 30S subunits) that binds SmrB. Cleaved mRNA becomes available for tmRNA ligation, leading to ribosomal subunit dissociation and rescue of stalled ribosomes. This is Ribosome rescue factor SmrB from Proteus mirabilis (strain HI4320).